The chain runs to 249 residues: DNA repair protein RecO (249 aa).

The protein belongs to the RecO family.

In terms of biological role, involved in DNA repair and RecF pathway recombination. The protein is DNA repair protein RecO of Rhodopseudomonas palustris (strain BisB5).